Reading from the N-terminus, the 228-residue chain is Aquaporin Z (228 aa).

2 helical membrane-spanning segments follow: residues 1–21 (MLNK…GGCG) and 23–43 (AILA…ALAF). Residues 63–65 (NPA) carry the NPA 1 motif. 3 helical membrane-spanning segments follow: residues 82-102 (IPYW…LYVI), 129-149 (MMAG…IILG), and 154-174 (LAPA…IHLV). The NPA 2 motif lies at 184–186 (NPA). The chain crosses the membrane as a helical span at residues 205–225 (LFWVAPLVGAVIGAIIWKGLL).

This sequence belongs to the MIP/aquaporin (TC 1.A.8) family. Homotetramer.

It is found in the cell inner membrane. It catalyses the reaction H2O(in) = H2O(out). In terms of biological role, channel that permits osmotically driven movement of water in both directions. It is involved in the osmoregulation and in the maintenance of cell turgor during volume expansion in rapidly growing cells. It mediates rapid entry or exit of water in response to abrupt changes in osmolarity. The sequence is that of Aquaporin Z from Brucella abortus biovar 1 (strain 9-941).